A 281-amino-acid chain; its full sequence is Thioesterase PikA5 (281 aa).

Residues 26 to 249 are thioesterase; sequence RLVCLPHAGG…WHEICNDISD (224 aa). The active-site Nucleophile; for thioesterase activity is Ser-99. Residue His-233 is the Proton acceptor; for thioesterase activity of the active site.

The protein belongs to the thioesterase family.

Its pathway is antibiotic biosynthesis. Functionally, involved in the biosynthesis of 12- and 14-membered ring macrolactone antibiotics such as methymycin, neomethymycin, narbomycin and pikromycin. Responsible for removing mis-formed acyl moieties (aberrant decarboxylation) that are bound to the PKS and could block it. Catalyzes the cleavage of methylmalonyl-[acp]. It exhibits some acyl-group specificity, and catalyzes the cleavage of propionyl and butyryl derivatives faster than acetyl malonyl or methylmalonyl derivatives. The polypeptide is Thioesterase PikA5 (Streptomyces venezuelae).